Here is a 401-residue protein sequence, read N- to C-terminus: Elongation factor Tu (401 aa).

A tr-type G domain is found at 10-211; the sequence is KPHLNVGTIG…ALDTFVPNPK (202 aa). The interval 19–26 is G1; it reads GHVDHGKT. 19-26 contributes to the GTP binding site; that stretch reads GHVDHGKT. Thr-26 is a binding site for Mg(2+). A G2 region spans residues 62-66; that stretch reads GITIA. The interval 83 to 86 is G3; sequence DCPG. Residues 83–87 and 138–141 contribute to the GTP site; these read DCPGH and NKAD. The segment at 138 to 141 is G4; that stretch reads NKAD. Residues 179-181 form a G5 region; it reads SAV.

Belongs to the TRAFAC class translation factor GTPase superfamily. Classic translation factor GTPase family. EF-Tu/EF-1A subfamily. In terms of assembly, monomer.

It localises to the cytoplasm. It carries out the reaction GTP + H2O = GDP + phosphate + H(+). Its function is as follows. GTP hydrolase that promotes the GTP-dependent binding of aminoacyl-tRNA to the A-site of ribosomes during protein biosynthesis. The protein is Elongation factor Tu of Leptospira interrogans serogroup Icterohaemorrhagiae serovar copenhageni (strain Fiocruz L1-130).